The primary structure comprises 221 residues: Small ribosomal subunit protein uS3 (221 aa).

In terms of domain architecture, KH type-2 spans isoleucine 39–lysine 108.

The protein belongs to the universal ribosomal protein uS3 family. In terms of assembly, part of the 30S ribosomal subunit. Forms a tight complex with proteins S10 and S14.

Binds the lower part of the 30S subunit head. Binds mRNA in the 70S ribosome, positioning it for translation. The sequence is that of Small ribosomal subunit protein uS3 from Clostridium botulinum (strain Alaska E43 / Type E3).